A 295-amino-acid chain; its full sequence is uncharacterized protein (295 aa).

A signal peptide spans 1 to 19 (MHKLLLIITVFFTFNVAQA).

This is an uncharacterized protein from Rickettsia prowazekii (strain Madrid E).